The primary structure comprises 336 residues: Nuclear envelope-associated protein 1 (336 aa).

A coiled-coil region spans residues Cys125–Lys261. Positions Lys240–Lys261 match the Bipartite nuclear localization signal motif. The chain crosses the membrane as a helical span at residues Phe313–Leu330.

As to quaternary structure, forms heteromers with NEAP2 and NEAP3. Interacts with SUN1; SUN2 and bZIP18.

It is found in the nucleus inner membrane. The protein resides in the nucleus. Its subcellular location is the nucleoplasm. This chain is Nuclear envelope-associated protein 1, found in Arabidopsis thaliana (Mouse-ear cress).